Consider the following 349-residue polypeptide: tRNA pseudouridine synthase D (349 aa).

Residue Phe-27 coordinates substrate. The Nucleophile role is filled by Asp-80. Residue Asn-129 coordinates substrate. A TRUD domain is found at 155 to 303 (GVPNYFGAQR…VEAARRAMLL (149 aa)). Phe-329 is a binding site for substrate.

This sequence belongs to the pseudouridine synthase TruD family.

It catalyses the reaction uridine(13) in tRNA = pseudouridine(13) in tRNA. Responsible for synthesis of pseudouridine from uracil-13 in transfer RNAs. The polypeptide is tRNA pseudouridine synthase D (Shigella flexneri).